An 884-amino-acid polypeptide reads, in one-letter code: E3 ubiquitin-protein ligase BRE1-like 1 (884 aa).

The interval 1–37 is disordered; that stretch reads MGSTGEPDRKRRLSSSVAPGGGAPVSPAKRLAVAPTS. Residues 49 to 86 are a coiled coil; it reads YKNQKLSEQLEAHKFEYRALENKFAGLKEKQRTHNETL. The interval 107-127 is disordered; sequence KSGSPNSSPGSGHNNVQKDGT. Residues 108 to 121 are compositionally biased toward low complexity; the sequence is SGSPNSSPGSGHNN. Coiled-coil stretches lie at residues 216 to 541, 580 to 663, 696 to 762, and 789 to 827; these read LNNV…ELKL, SKLE…LQQI, RNLQ…QSLD, and KKRI…KEYR. An RING-type zinc finger spans residues 832–871; it reads CGICHDRQKEVVITKCYHLFCNQCIQKSLGNRQRRCPSCS.

The protein belongs to the BRE1 family. Interacts with SKIPA. Interacts with HUB2.

It localises to the nucleus. The catalysed reaction is S-ubiquitinyl-[E2 ubiquitin-conjugating enzyme]-L-cysteine + [acceptor protein]-L-lysine = [E2 ubiquitin-conjugating enzyme]-L-cysteine + N(6)-ubiquitinyl-[acceptor protein]-L-lysine.. The protein operates within protein modification; protein ubiquitination. In terms of biological role, E3 ubiquitin-protein ligase that monoubiquitinates H2B to form H2BK143ub1. H2BK143ub1 gives a specific tag for epigenetic transcriptional activation and is a prerequisite for H3 Lys-4 methylation (H3K4me). It thereby plays a central role in histone code and gene regulation. H2B monoubiquitination (H2BK143ub1), mediated by HUB1, modulates transcriptional regulation of anther development, likely by promoting histone H3K4 dimethylation (H3K4me2) in the chromatin of the key tapetum degradation-related genes C4, CP1 and UDT1. This is E3 ubiquitin-protein ligase BRE1-like 1 from Oryza sativa subsp. japonica (Rice).